Reading from the N-terminus, the 223-residue chain is MTSDASQDGPDAVAGSGDRAVAAAAERAKLTAARNIPTFDDLPLPADTANLRHGANLHDALLALLPLVGVWRGEGEGRGPHGDYRFGQQIVVSHDGGDYLNWEARSWRLDEDGQYEEPGLRETGFWRFVSDPEDDPSESQAIELLLAHSAGYVELFYGRPLTQSSWELVTDALARSRSGVLVGGAKRLYGIIEGGDLAYVEERVDADGGLVPHLSARLSRYAG.

The GXWXGXG motif lies at 69–75 (GVWRGEG). Heme b-binding residues include K186 and H213.

Belongs to the nitrobindin family. Homodimer. It depends on heme b as a cofactor.

It carries out the reaction peroxynitrite = nitrate. It participates in nitrogen metabolism. Functionally, heme-binding protein able to scavenge peroxynitrite and to protect free L-tyrosine against peroxynitrite-mediated nitration, by acting as a peroxynitrite isomerase that converts peroxynitrite to nitrate. Therefore, this protein likely plays a role in peroxynitrite sensing and in the detoxification of reactive nitrogen and oxygen species (RNS and ROS, respectively). Is able to bind nitric oxide (NO) in vitro, but may act as a sensor of peroxynitrite levels in vivo. The protein is Peroxynitrite isomerase 1 of Mycobacterium marinum (strain ATCC BAA-535 / M).